Reading from the N-terminus, the 598-residue chain is UvrABC system protein C (598 aa).

The 79-residue stretch at 13–91 (TLPGVYRMVD…IKGLKPRFNI (79 aa)) folds into the GIY-YIG domain. A UVR domain is found at 200 to 235 (TALTEEITAQMNAAAENLDFETAAYLRDRLRMLATV).

It belongs to the UvrC family. In terms of assembly, interacts with UvrB in an incision complex.

It localises to the cytoplasm. The UvrABC repair system catalyzes the recognition and processing of DNA lesions. UvrC both incises the 5' and 3' sides of the lesion. The N-terminal half is responsible for the 3' incision and the C-terminal half is responsible for the 5' incision. In Thiobacillus denitrificans (strain ATCC 25259 / T1), this protein is UvrABC system protein C.